We begin with the raw amino-acid sequence, 302 residues long: Uricase (302 aa).

Active-site charge relay system residues include Lys22 and Thr67. 6 residues coordinate urate: Thr67, Asp68, Phe163, Arg180, Gln223, and Asn249. The Charge relay system role is filled by His251.

It belongs to the uricase family. In terms of assembly, homotetramer.

The enzyme catalyses urate + O2 + H2O = 5-hydroxyisourate + H2O2. The protein operates within purine metabolism; urate degradation; (S)-allantoin from urate: step 1/3. Catalyzes the oxidation of uric acid to 5-hydroxyisourate, which is further processed to form (S)-allantoin. This chain is Uricase (uox), found in Arthrobacter globiformis.